The sequence spans 1295 residues: Phosphoribosylformylglycinamidine synthase (1295 aa).

Positions 305 to 327 (WPGAATGSGGEIRDEGATGRGAK) are disordered. Residues 307-318 (GAATGSGGEIRD) and alanine 678 contribute to the ATP site. Glutamate 718, asparagine 722, and aspartate 884 together coordinate Mg(2+). Residue serine 886 participates in ATP binding. Residues 1042–1295 (VAVLREQGVN…IFRNARKQLG (254 aa)) form the Glutamine amidotransferase type-1 domain. The active-site Nucleophile is the cysteine 1135. Residues histidine 1260 and glutamate 1262 contribute to the active site.

In the N-terminal section; belongs to the FGAMS family. Monomer.

The protein localises to the cytoplasm. The enzyme catalyses N(2)-formyl-N(1)-(5-phospho-beta-D-ribosyl)glycinamide + L-glutamine + ATP + H2O = 2-formamido-N(1)-(5-O-phospho-beta-D-ribosyl)acetamidine + L-glutamate + ADP + phosphate + H(+). It participates in purine metabolism; IMP biosynthesis via de novo pathway; 5-amino-1-(5-phospho-D-ribosyl)imidazole from N(2)-formyl-N(1)-(5-phospho-D-ribosyl)glycinamide: step 1/2. Functionally, phosphoribosylformylglycinamidine synthase involved in the purines biosynthetic pathway. Catalyzes the ATP-dependent conversion of formylglycinamide ribonucleotide (FGAR) and glutamine to yield formylglycinamidine ribonucleotide (FGAM) and glutamate. In Shigella sonnei (strain Ss046), this protein is Phosphoribosylformylglycinamidine synthase.